The chain runs to 1010 residues: Antigenic heat-stable 120 kDa protein (1010 aa).

2 disordered regions span residues 1 to 34 (DTSE…QTTT) and 347 to 396 (GQSK…QSQQ). Basic and acidic residues predominate over residues 12–27 (EYTEEQKQTLEQEQKE). Composition is skewed to polar residues over residues 347–372 (GQSK…QHKQ) and 379–396 (PTNQ…QSQQ).

The protein localises to the cytoplasm. In Rickettsia parkeri, this protein is Antigenic heat-stable 120 kDa protein (sca4).